Reading from the N-terminus, the 117-residue chain is Gamma-aminobutyric acid receptor-associated protein-like 3 (117 aa).

The tract at residues 1–22 is interaction with beta-tubulin; it reads MKFQYKEVHPFEYRKKEGEKIR. The interval 36–68 is interaction with GABRG2; the sequence is APKARVPDLDRRKYLVPSDLTDGQFYLLIRKRI. A lipid anchor (Phosphatidylethanolamine amidated glycine) is attached at G116. Residue K117 is a propeptide, removed in mature form.

This sequence belongs to the ATG8 family. Interacts with GABRG2 and beta-tubulin. In terms of processing, the precursor molecule is cleaved by ATG4B to form the cytosolic form, GABARAPL3-I. This is activated by APG7L/ATG7, transferred to ATG3 and conjugated to phospholipid to form the membrane-bound form, GABARAPL3-II. ATG4B also mediates the delipidation required for GABARAPL1 recycling when autophagosomes fuse with lysosomes. As to expression, ubiquitous. Expressed at very high levels in the brain, heart, peripheral blood leukocytes, liver, kidney, placenta and skeletal muscle. Expressed at very low levels in thymus and small intestine.

It localises to the cytoplasm. Its subcellular location is the cytoskeleton. The protein localises to the cytoplasmic vesicle. The protein resides in the autophagosome membrane. Its function is as follows. Ubiquitin-like modifier involved in autophagosome formation. Whereas LC3s are involved in elongation of the phagophore membrane, the GABARAP/GATE-16 subfamily is essential for a later stage in autophagosome maturation. This Homo sapiens (Human) protein is Gamma-aminobutyric acid receptor-associated protein-like 3 (GABARAPL3).